A 317-amino-acid chain; its full sequence is Olfactory receptor 10AD1 (317 aa).

Topologically, residues Met1 to Ala25 are extracellular. A glycan (N-linked (GlcNAc...) asparagine) is linked at Asn4. The chain crosses the membrane as a helical span at residues Leu26–Ile46. Residues Phe47–Lys55 are Cytoplasmic-facing. The helical transmembrane segment at Leu56–Thr76 threads the bilayer. Topologically, residues Thr77–Thr100 are extracellular. Cys98 and Cys190 form a disulfide bridge. Residues Gln101–Tyr121 traverse the membrane as a helical segment. Residues Asp122–Lys140 are Cytoplasmic-facing. Residues Val141–Glu161 traverse the membrane as a helical segment. Residues Tyr162–Trp198 are Extracellular-facing. The chain crosses the membrane as a helical span at residues Ala199–Ser218. The Cytoplasmic segment spans residues Tyr219–Thr238. Residues Phe239–Ser259 traverse the membrane as a helical segment. The Extracellular segment spans residues Tyr260–Asp272. A helical transmembrane segment spans residues Lys273–Phe293. The Cytoplasmic segment spans residues Arg294–Val317.

It belongs to the G-protein coupled receptor 1 family.

It is found in the cell membrane. In terms of biological role, odorant receptor. This chain is Olfactory receptor 10AD1 (OR10AD1), found in Homo sapiens (Human).